Reading from the N-terminus, the 73-residue chain is Large ribosomal subunit protein bL31 (73 aa).

4 residues coordinate Zn(2+): cysteine 16, cysteine 18, cysteine 36, and cysteine 39.

Belongs to the bacterial ribosomal protein bL31 family. Type A subfamily. As to quaternary structure, part of the 50S ribosomal subunit. The cofactor is Zn(2+).

Functionally, binds the 23S rRNA. This Citrifermentans bemidjiense (strain ATCC BAA-1014 / DSM 16622 / JCM 12645 / Bem) (Geobacter bemidjiensis) protein is Large ribosomal subunit protein bL31.